The following is a 106-amino-acid chain: Neisseria hypothetical transcription factor (106 aa).

Residues 26 to 80 enclose the HTH cro/C1-type domain; the sequence is MRLFRVNKGWSQEELARQCGLDRTYVSAVERKRWNIALSNIEKMAAALGVAAYQL. The H-T-H motif DNA-binding region spans 37–56; it reads QEELARQCGLDRTYVSAVER.

Homodimer. Can interact with the dimeric form of the DNA mimic protein DMP19 with 1:1 stoichiometry.

It localises to the cytoplasm. Repressor activity is inhibited in the presence of the DNA mimic protein DMP19, which interacts with NHTF and prevents binding of NHTF to its DNA-binding sites. Transcriptional regulator probably involved in the response to nitrogen levels. Down-regulates its own expression as well as the expression of the downstream gene, glnD, which encodes the [Protein-PII] uridylyltransferase, a key enzyme in the nitrogen regulation system. Acts by binding to a specific palindromic DNA sequence (5'-TGTNANTNACA-3') in its 5'-untranslated region. The polypeptide is Neisseria hypothetical transcription factor (Neisseria meningitidis serogroup B (strain ATCC BAA-335 / MC58)).